We begin with the raw amino-acid sequence, 375 residues long: METSSGTPELKVISTPTYGGHYVKYVVAGTDFEVTARYKPPLRPIGRGAYGIVCSLFDTVTGEEVAVKKIGNAFDNRIDAKRTLREIKLLRHMDHENVVAITDIIRPPTRENFNDVYIVYELMDTDLHQIIRSNQALTEDHCQYFLYQILRGLKYIHSANVLHRDLKPTNLLVNANCDLKIADFGLARTLSETDFMTEYVVTRWYRAPELLLNCSAYTAAIDIWSVGCIFMELLNRSALFPGRDYVHQLRLITELIGTPEDRDLGFLRSDNARRYIKHLPRQSPIPLTQKFRGINRSALDLVEKMLVFDPAKRITVEAALAHPYLASLHDINDEPASVSPFEFDFEEPSISEEHIKDLIWREALDCSLGPDDMVQ.

The region spanning 39–325 (KPPLRPIGRG…VEAALAHPYL (287 aa)) is the Protein kinase domain. ATP contacts are provided by residues 45 to 53 (IGRGAYGIV) and Lys68. The active-site Proton acceptor is Asp165. At Thr197 the chain carries Phosphothreonine. The TXY signature appears at 197 to 199 (TEY). Tyr199 is subject to Phosphotyrosine.

The protein belongs to the protein kinase superfamily. CMGC Ser/Thr protein kinase family. MAP kinase subfamily. The cofactor is Mg(2+). Post-translationally, dually phosphorylated on Thr-197 and Tyr-199, which activates the enzyme. Phosphorylated in response to pathogen-associated molecular pattern (PAMP) chitin and in response to necrotrophic fungus B.cinerea spores. Not phosphorylated in response to osmotic stress. In terms of tissue distribution, expressed strongly in the apical cells of caulonemal air filaments and rhizoids in fully developed plants and less strongly, but readily detectable in filamentous protonemal tissue at the edge of the plant consisting of both chloronema and caulonema. When filamentous growth of protonema is promoted, the expression is strongest in newly formed apical tip cells of protonemal tissue.

The protein resides in the cytoplasm. It is found in the nucleus. The enzyme catalyses L-seryl-[protein] + ATP = O-phospho-L-seryl-[protein] + ADP + H(+). It carries out the reaction L-threonyl-[protein] + ATP = O-phospho-L-threonyl-[protein] + ADP + H(+). Its activity is regulated as follows. Activated by threonine and tyrosine phosphorylation. Activated in response to bacterial and fungal pathogen-associated molecular patterns (PAMPs) including chitin, chitosan and peptidyl glycans (PGNs). Activation in response to chitin requires the CERK1, MEKK1a/b, MKK1a/b/c and MPK4a/b signaling pathway. Activated in response to necrotrophic fungus B.cinerea spores. Not activated in response to osmotic stress. The CERK1, MEKK1a/b, MKK1a/b/c and MPK4a/b proteins are involved in pathogen defense. The pathway induces rapid growth inhibition, cell wall depositions and accumulation of defense-related transcripts. This protein is required for innate immunity triggered by pathogen-associated molecular patterns (PAMPs). Involved in resistance to necrotrophic fungi B.cinerea and A.brassicicola. Involved in the transduction of signals from chitosan perception to the activation of defense genes. This Physcomitrium patens (Spreading-leaved earth moss) protein is Mitogen-activated protein kinase 4a (MPK4a).